A 314-amino-acid polypeptide reads, in one-letter code: Curved DNA-binding protein (314 aa).

In terms of domain architecture, J spans 5-69 (DYYKILDVEP…EKRAEYDELR (65 aa)). Positions 73 to 92 (RQGRPFQTPPGWQSRAGAGA) are disordered.

It localises to the cytoplasm. The protein resides in the nucleoid. In terms of biological role, DNA-binding protein that preferentially recognizes a curved DNA sequence. It is probably a functional analog of DnaJ; displays overlapping activities with DnaJ, but functions under different conditions, probably acting as a molecular chaperone in an adaptive response to environmental stresses other than heat shock. Lacks autonomous chaperone activity; binds native substrates and targets them for recognition by DnaK. Its activity is inhibited by the binding of CbpM. The protein is Curved DNA-binding protein of Pseudomonas syringae pv. tomato (strain ATCC BAA-871 / DC3000).